The primary structure comprises 262 residues: Acyl-[acyl-carrier-protein]--UDP-N-acetylglucosamine O-acyltransferase (262 aa).

Belongs to the transferase hexapeptide repeat family. LpxA subfamily. Homotrimer.

It is found in the cytoplasm. The catalysed reaction is a (3R)-hydroxyacyl-[ACP] + UDP-N-acetyl-alpha-D-glucosamine = a UDP-3-O-[(3R)-3-hydroxyacyl]-N-acetyl-alpha-D-glucosamine + holo-[ACP]. It participates in glycolipid biosynthesis; lipid IV(A) biosynthesis; lipid IV(A) from (3R)-3-hydroxytetradecanoyl-[acyl-carrier-protein] and UDP-N-acetyl-alpha-D-glucosamine: step 1/6. In terms of biological role, involved in the biosynthesis of lipid A, a phosphorylated glycolipid that anchors the lipopolysaccharide to the outer membrane of the cell. The protein is Acyl-[acyl-carrier-protein]--UDP-N-acetylglucosamine O-acyltransferase of Haemophilus influenzae (strain ATCC 51907 / DSM 11121 / KW20 / Rd).